Consider the following 2258-residue polypeptide: Genome polyprotein 1 (2258 aa).

The Helicase ATP-binding domain maps to 439 to 597; that stretch reads SMAQEAKQWS…AVRRYEIKTV (159 aa). 487–494 provides a ligand contact to ATP; the sequence is RAATVNVT. Positions 612-778 constitute a Helicase C-terminal domain; that stretch reads DKENSLYVLQ…GVQFYINEHF (167 aa). Tyr-1141 is subject to O-(5'-phospho-RNA)-tyrosine. The Peptidase C4 domain maps to 1257–1476; that stretch reads ATLEGMTMKP…TKPRNMQSAP (220 aa). Residues His-1302, Asp-1338, and Cys-1405 each act as for nuclear inclusion protein A activity in the active site. The region spanning 1745-1869 is the RdRp catalytic domain; that stretch reads WTHGSGDGSR…AMSPSFMVKF (125 aa). Disordered stretches follow at residues 2027 to 2047 and 2233 to 2258; these read NMAAAPPDNRRSRAVVPRGTS and TSEQTNMRTTETRRRNDYDGHEALLR. Residues 2242 to 2258 show a composition bias toward basic and acidic residues; the sequence is TETRRRNDYDGHEALLR.

Belongs to the bymoviruses polyprotein 1 family. In terms of processing, VPg is uridylylated by the polymerase and is covalently attached to the 5'-end of the genomic RNA. This uridylylated form acts as a nucleotide-peptide primer for the polymerase. The viral RNA1 of bymoviruses is expressed as a single polyprotein which undergoes post-translational proteolytic processing by the main proteinase NIa-pro resulting in the production of at least eight individual proteins.

Its subcellular location is the host cytoplasmic vesicle. It localises to the virion. It carries out the reaction RNA(n) + a ribonucleoside 5'-triphosphate = RNA(n+1) + diphosphate. The enzyme catalyses Hydrolyzes glutaminyl bonds, and activity is further restricted by preferences for the amino acids in P6 - P1' that vary with the species of potyvirus, e.g. Glu-Xaa-Xaa-Tyr-Xaa-Gln-|-(Ser or Gly) for the enzyme from tobacco etch virus. The natural substrate is the viral polyprotein, but other proteins and oligopeptides containing the appropriate consensus sequence are also cleaved.. In terms of biological role, indispensable for virus replication. Functionally, mediates the cap-independent, EIF4E-dependent translation of viral genomic RNAs. Binds to the cap-binding site of host EIF4E and thus interferes with the host EIF4E-dependent mRNA export and translation. VPg-RNA directly binds EIF4E and is a template for transcription. Also forms trimeric complexes with EIF4E-EIF4G, which are templates for translation. Has RNA-binding and proteolytic activities. Its function is as follows. An RNA-dependent RNA polymerase that plays an essential role in the virus replication. The chain is Genome polyprotein 1 from Barley mild mosaic virus (strain Na1) (BaMMV).